A 191-amino-acid chain; its full sequence is Molybdenum cofactor guanylyltransferase (191 aa).

GTP contacts are provided by residues 13–15, K26, D72, and D102; that span reads LAG. D102 contacts Mg(2+).

The protein belongs to the MobA family. In terms of assembly, monomer. Mg(2+) serves as cofactor.

It is found in the cytoplasm. The catalysed reaction is Mo-molybdopterin + GTP + H(+) = Mo-molybdopterin guanine dinucleotide + diphosphate. Functionally, transfers a GMP moiety from GTP to Mo-molybdopterin (Mo-MPT) cofactor (Moco or molybdenum cofactor) to form Mo-molybdopterin guanine dinucleotide (Mo-MGD) cofactor. The polypeptide is Molybdenum cofactor guanylyltransferase (Pseudomonas putida (strain ATCC 47054 / DSM 6125 / CFBP 8728 / NCIMB 11950 / KT2440)).